Here is a 1049-residue protein sequence, read N- to C-terminus: Presequence protease, mitochondrial (1049 aa).

A mitochondrion-targeting transit peptide spans 1 to 39 (MLRSYLHLGRHRTPAFRQPLGRLLRPTASILQYAQSRTL). A Zn(2+)-binding site is contributed by H113. Catalysis depends on E116, which acts as the Proton acceptor. Zn(2+) is bound at residue H117. E189 is an active-site residue. E222 contacts Zn(2+).

The protein belongs to the peptidase M16 family. PreP subfamily. In terms of assembly, monomer and homodimer; homodimerization is induced by binding of the substrate. It depends on Zn(2+) as a cofactor.

The protein localises to the mitochondrion intermembrane space. The protein resides in the mitochondrion matrix. Degrades mitochondrial transit peptides after their cleavage in the intermembrane space or in the matrix, and presequence peptides; clearance of these peptides is required to keep the presequence processing machinery running. Preferentially cleaves the N-terminal side of paired basic amino acid residues. Also degrades other unstructured peptides. May function as an ATP-dependent peptidase as opposed to a metalloendopeptidase. The polypeptide is Presequence protease, mitochondrial (cym1) (Emericella nidulans (strain FGSC A4 / ATCC 38163 / CBS 112.46 / NRRL 194 / M139) (Aspergillus nidulans)).